We begin with the raw amino-acid sequence, 1203 residues long: DNA-directed RNA polymerase subunit beta' (1203 aa).

4 residues coordinate Zn(2+): Cys-60, Cys-62, Cys-75, and Cys-78. Mg(2+) is bound by residues Asp-449, Asp-451, and Asp-453. Residues Cys-818, Cys-892, Cys-899, and Cys-902 each contribute to the Zn(2+) site.

It belongs to the RNA polymerase beta' chain family. As to quaternary structure, the RNAP catalytic core consists of 2 alpha, 1 beta, 1 beta' and 1 omega subunit. When a sigma factor is associated with the core the holoenzyme is formed, which can initiate transcription. It depends on Mg(2+) as a cofactor. Zn(2+) is required as a cofactor.

The catalysed reaction is RNA(n) + a ribonucleoside 5'-triphosphate = RNA(n+1) + diphosphate. In terms of biological role, DNA-dependent RNA polymerase catalyzes the transcription of DNA into RNA using the four ribonucleoside triphosphates as substrates. This Bacillus thuringiensis (strain Al Hakam) protein is DNA-directed RNA polymerase subunit beta'.